The chain runs to 106 residues: uncharacterized protein (106 aa).

The 93-residue stretch at 1 to 93 (MSIFYVLGKK…WEAKWKEAKI (93 aa)) folds into the HTH hxlR-type domain.

This is an uncharacterized protein from Methanocaldococcus jannaschii (strain ATCC 43067 / DSM 2661 / JAL-1 / JCM 10045 / NBRC 100440) (Methanococcus jannaschii).